Consider the following 303-residue polypeptide: Glutamyl-Q tRNA(Asp) synthetase (303 aa).

L-glutamate is bound by residues 9-13 and glutamate 45; that span reads RFAPS. The 'HIGH' region signature appears at 12–22; that stretch reads PSPSGSLHFGS. Zn(2+) contacts are provided by cysteine 101, cysteine 103, tyrosine 115, and cysteine 119. Tyrosine 172 and arginine 190 together coordinate L-glutamate. The 'KMSKS' region signature appears at 228–232; sequence KLSKQ. Lysine 231 is an ATP binding site.

Belongs to the class-I aminoacyl-tRNA synthetase family. GluQ subfamily. Requires Zn(2+) as cofactor.

Catalyzes the tRNA-independent activation of glutamate in presence of ATP and the subsequent transfer of glutamate onto a tRNA(Asp). Glutamate is transferred on the 2-amino-5-(4,5-dihydroxy-2-cyclopenten-1-yl) moiety of the queuosine in the wobble position of the QUC anticodon. The protein is Glutamyl-Q tRNA(Asp) synthetase of Serratia proteamaculans (strain 568).